The sequence spans 366 residues: Aminomethyltransferase (366 aa).

Belongs to the GcvT family. The glycine cleavage system is composed of four proteins: P, T, L and H.

It catalyses the reaction N(6)-[(R)-S(8)-aminomethyldihydrolipoyl]-L-lysyl-[protein] + (6S)-5,6,7,8-tetrahydrofolate = N(6)-[(R)-dihydrolipoyl]-L-lysyl-[protein] + (6R)-5,10-methylene-5,6,7,8-tetrahydrofolate + NH4(+). The glycine cleavage system catalyzes the degradation of glycine. The protein is Aminomethyltransferase of Bacillus cereus (strain B4264).